The following is a 282-amino-acid chain: Probable septum site-determining protein MinC (282 aa).

The segment at 103-147 is disordered; sequence SQSRRGGKDEAPKEKAGKPEATAASGQTDAEAAGNTGKGKDSEGA. A compositionally biased stretch (basic and acidic residues) spans 104 to 120; the sequence is QSRRGGKDEAPKEKAGK.

The protein belongs to the MinC family. Interacts with MinD and FtsZ.

Cell division inhibitor that blocks the formation of polar Z ring septums. Rapidly oscillates between the poles of the cell to destabilize FtsZ filaments that have formed before they mature into polar Z rings. Prevents FtsZ polymerization. This is Probable septum site-determining protein MinC from Cupriavidus metallidurans (strain ATCC 43123 / DSM 2839 / NBRC 102507 / CH34) (Ralstonia metallidurans).